The following is a 231-amino-acid chain: Equistatin (231 aa).

An N-terminal signal peptide occupies residues 1–32 (MALSQNQAKFSKGFVVMIWVLFIACAITSTEA). 3 Thyroglobulin type-1 domains span residues 34–95 (LTKC…SPDC), 102–163 (LTLC…RPTC), and 167–231 (LSEC…RPTC). Disulfide bonds link cysteine 37-cysteine 56, cysteine 67-cysteine 74, cysteine 76-cysteine 95, cysteine 105-cysteine 124, cysteine 135-cysteine 142, cysteine 144-cysteine 163, cysteine 170-cysteine 191, cysteine 202-cysteine 209, and cysteine 211-cysteine 231.

It belongs to the protease inhibitor I31 family.

It is found in the secreted. Its function is as follows. Potent inhibitor of papain-like cysteine proteinases (Ki=0.18-0.57 nM on papain), as well as of the aspartic proteinase cathepsin D (Ki=0.3-05 nM). The chain is Equistatin from Actinia equina (Beadlet anemone).